A 163-amino-acid polypeptide reads, in one-letter code: I-Kappa-B like protein N3 (163 aa).

2 ANK repeats span residues 62–95 (LGDT…NLNT) and 100–130 (NGDT…NLQT).

Belongs to the polydnaviridae I-Kappa-B like protein family.

In terms of biological role, suppresses the host immune response through NF-kappa-B inactivation. Possesses ankyrin repeat domains required for NF-kappa-B binding but lacks the regulatory regions required for dissociation from NF-kappa-B and degradation. Therefore, prevents host NF-kappa-B release and subsequent activation. This Microplitis demolitor (Parasitoid wasp) protein is I-Kappa-B like protein N3 (N6).